We begin with the raw amino-acid sequence, 1275 residues long: Inner capsid protein lambda-1 (1275 aa).

A compositionally biased stretch (basic residues) spans 1–12; the sequence is MKRIPRKTRGKS. The disordered stretch occupies residues 1–147; sequence MKRIPRKTRG…NVDNEGGDNQ (147 aa). The segment covering 18 to 35 has biased composition (basic and acidic residues); the sequence is DSTERADDGSAQLRDKQS. The segment covering 55–66 has biased composition (polar residues); sequence TRPSLQTVQKAT. Basic and acidic residues-rich tracts occupy residues 80–98 and 105–117; these read AVDKKGNTKGDKTNEHVEA and ATKRQAKDTDKQK. Polar residues predominate over residues 118–139; the sequence is AQVTYNDTGINNANELSRSGNV. Residues 181 to 203 form a C2H2-type zinc finger; that stretch reads YQCHVCSAVLFSPLDLDAHVASH.

It belongs to the turreted BTV-fold inner capsid family. As to quaternary structure, homodecamer; each decamer is made up of two conformers of VP2, called VP2A and VP2B. 12 homodecamers assemble to form an icosahedral capsid. Interacts with protein mu-NS; in viral inclusions. Mg(2+) serves as cofactor. Mn(2+) is required as a cofactor.

The protein localises to the virion. The enzyme catalyses ATP + H2O = ADP + phosphate + H(+). Functionally, inner capsid protein that self-assembles to form an icosahedral capsid with a T=2 symmetry, which consists of 120 copies of VP2, with channels at each of its five-fold vertices. This capsid constitutes the innermost concentric layer of the viral mature particle. Displays NTPase, RNA 5'-triphosphatase (RTPase) and RNA helicase activities and probably participates in transcription of the viral genome. Helicase activity might be involved in unwinding or reannealing dsRNA during RNA synthesis. RTPase enzymatic activity represents the first step in RNA capping, which yields a 5'-diphosphorylated plus-strand RNA. The polypeptide is Inner capsid protein lambda-1 (Reovirus type 2 (strain D5/Jones) (T2J)).